The primary structure comprises 338 residues: DNA-directed RNA polymerase subunit alpha (338 aa).

The segment at 1 to 225 (MLISQRPTLT…ELFGLARELN (225 aa)) is alpha N-terminal domain (alpha-NTD). The alpha C-terminal domain (alpha-CTD) stretch occupies residues 242–338 (YIAAYSMPIE…YIDVEPEDAE (97 aa)). A disordered region spans residues 314–338 (FDPSTLEGYDAETGGYIDVEPEDAE).

Belongs to the RNA polymerase alpha chain family. As to quaternary structure, homodimer. The RNAP catalytic core consists of 2 alpha, 1 beta, 1 beta' and 1 omega subunit. When a sigma factor is associated with the core the holoenzyme is formed, which can initiate transcription.

It catalyses the reaction RNA(n) + a ribonucleoside 5'-triphosphate = RNA(n+1) + diphosphate. In terms of biological role, DNA-dependent RNA polymerase catalyzes the transcription of DNA into RNA using the four ribonucleoside triphosphates as substrates. This is DNA-directed RNA polymerase subunit alpha from Corynebacterium efficiens (strain DSM 44549 / YS-314 / AJ 12310 / JCM 11189 / NBRC 100395).